Reading from the N-terminus, the 241-residue chain is MVEPKYKRILIKLSGEALAGDKGVGINIQTVQKMAEEIKEVHDLGIEIALVIGGGNLWRGEPAAEAGMDRVQADYTGMLGTVMNALVMADSLQRVGVDTRVQTAIAMQQVAEPYIRGRALRHLQKGRIVIFGAGIGSPYFSTDTTAALRAAEIEADAILMAKNGVDGVYNADPKKDKTAVKFDELTHRDVISKGLRIMDSTASTLSMDNDIDLVVFNMNEAGNIKRVVFGEQIGTTVSNNL.

12–15 (KLSG) lines the ATP pocket. The interval 20–25 (GDKGVG) is involved in allosteric activation by GTP. Glycine 54 contacts UMP. Positions 55 and 59 each coordinate ATP. UMP is bound by residues aspartate 74 and 135–142 (IGSPYFST). Residues asparagine 163, tyrosine 169, and aspartate 172 each contribute to the ATP site.

Belongs to the UMP kinase family. In terms of assembly, homohexamer.

It is found in the cytoplasm. It catalyses the reaction UMP + ATP = UDP + ADP. It participates in pyrimidine metabolism; CTP biosynthesis via de novo pathway; UDP from UMP (UMPK route): step 1/1. Allosterically activated by GTP. Inhibited by UTP. Functionally, catalyzes the reversible phosphorylation of UMP to UDP. This is Uridylate kinase from Streptococcus gordonii (strain Challis / ATCC 35105 / BCRC 15272 / CH1 / DL1 / V288).